Reading from the N-terminus, the 208-residue chain is Outer-membrane lipoprotein carrier protein (208 aa).

A signal peptide spans Met-1–Ala-22.

The protein belongs to the LolA family. In terms of assembly, monomer.

Its subcellular location is the periplasm. Its function is as follows. Participates in the translocation of lipoproteins from the inner membrane to the outer membrane. Only forms a complex with a lipoprotein if the residue after the N-terminal Cys is not an aspartate (The Asp acts as a targeting signal to indicate that the lipoprotein should stay in the inner membrane). The sequence is that of Outer-membrane lipoprotein carrier protein from Shewanella loihica (strain ATCC BAA-1088 / PV-4).